A 282-amino-acid chain; its full sequence is MIEKRPISNLIGHLMLIIGIIIVVFPIYYTFVASSMSSVEIIRPPMPLVPGTRLAENYSEALSGGVERVVGVSLERLLFNTFVVAIAIAVGKIVISFLSAFAIVFFRFPLRMAFFWMIFITLMLPVEVRILPTYKVIVDLGLIDTYAGLTLPLMASATATFLFRQFFLTIPGELVEAARIDNAGPFRFMRDILLPLSKTNIAALFVILFIYGWTQYLWPLLVTNDSRMNTIIIGLRKMVDFTDASTPWNYVMVTAILAIIPPVAVVVLMQRWFVKGLVETEK.

6 helical membrane-spanning segments follow: residues 14 to 34 (LMLI…FVAS), 86 to 106 (IAIA…IVFF), 112 to 132 (MAFF…RILP), 136 to 156 (VIVD…LMAS), 201 to 221 (IAAL…WPLL), and 248 to 268 (WNYV…VVVL). Residues 78-269 (LFNTFVVAIA…IPPVAVVVLM (192 aa)) enclose the ABC transmembrane type-1 domain.

It belongs to the binding-protein-dependent transport system permease family. In terms of assembly, the complex is composed of two ATP-binding proteins (UgpC), two transmembrane proteins (UgpA and UgpE) and a solute-binding protein (UgpB).

The protein localises to the cell inner membrane. Part of the ABC transporter complex UgpBAEC involved in sn-glycerol-3-phosphate (G3P) import. Probably responsible for the translocation of the substrate across the membrane. The sequence is that of sn-glycerol-3-phosphate transport system permease protein UgpE (ugpE) from Rhizobium meliloti (strain 1021) (Ensifer meliloti).